We begin with the raw amino-acid sequence, 1159 residues long: WASH complex subunit 5 (1159 aa).

It belongs to the strumpellin family. As to quaternary structure, component of the WASH complex.

It is found in the early endosome. In terms of biological role, acts at least in part as component of the WASH complex which seems to regulate washc1 nucleation-promoting factor (NPF) activity and is required for its membrane targeting during endosomal sorting. The sequence is that of WASH complex subunit 5 from Danio rerio (Zebrafish).